The primary structure comprises 234 residues: Probable plastid-lipid-associated protein 5, chloroplastic (234 aa).

A chloroplast-targeting transit peptide spans 1-45 (MALPWCLKTGVLTSPAAGFNHPSDSGFAVPTKLLSIRKGDRERLR).

The protein belongs to the PAP/fibrillin family.

It localises to the plastid. It is found in the chloroplast thylakoid. The chain is Probable plastid-lipid-associated protein 5, chloroplastic (PAP5) from Arabidopsis thaliana (Mouse-ear cress).